A 347-amino-acid chain; its full sequence is Gentisate 1,2 dioxygenase 1 (347 aa).

The region spanning 96 to 163 (LQLILPGEVA…DSDKPMIWMD (68 aa)) is the Cupin type-2 domain.

Belongs to the gentisate 1,2-dioxygenase family. As to quaternary structure, homotetramer. The cofactor is Fe(2+).

It catalyses the reaction 2,5-dihydroxybenzoate + O2 = 3-maleylpyruvate + H(+). Completely inhibited by the presence of 5 mM Cu(2+). Partially inhibited with 5 mM Mn(2+), Zn(2+) or EDTA. Involved in the degradation of gentisate. Catalyzes the conversion of gentisate (2,5-dihydroxybenzoate) to maleylpyruvate. Exhibits broad substrate specificities towards alkyl and halogenated gentisates. This Aquipseudomonas alcaligenes (Pseudomonas alcaligenes) protein is Gentisate 1,2 dioxygenase 1.